The primary structure comprises 370 residues: tRNA 2-selenouridine synthase (370 aa).

The region spanning 12 to 136 (FLEDVPMMDT…MRNFLLDTTR (125 aa)) is the Rhodanese domain. C95 serves as the catalytic S-selanylcysteine intermediate.

Belongs to the SelU family. Monomer.

It carries out the reaction 5-methylaminomethyl-2-thiouridine(34) in tRNA + selenophosphate + (2E)-geranyl diphosphate + H2O + H(+) = 5-methylaminomethyl-2-selenouridine(34) in tRNA + (2E)-thiogeraniol + phosphate + diphosphate. It catalyses the reaction 5-methylaminomethyl-2-thiouridine(34) in tRNA + (2E)-geranyl diphosphate = 5-methylaminomethyl-S-(2E)-geranyl-thiouridine(34) in tRNA + diphosphate. The enzyme catalyses 5-methylaminomethyl-S-(2E)-geranyl-thiouridine(34) in tRNA + selenophosphate + H(+) = 5-methylaminomethyl-2-(Se-phospho)selenouridine(34) in tRNA + (2E)-thiogeraniol. The catalysed reaction is 5-methylaminomethyl-2-(Se-phospho)selenouridine(34) in tRNA + H2O = 5-methylaminomethyl-2-selenouridine(34) in tRNA + phosphate. Its function is as follows. Involved in the post-transcriptional modification of the uridine at the wobble position (U34) of tRNA(Lys), tRNA(Glu) and tRNA(Gln). Catalyzes the conversion of 2-thiouridine (S2U-RNA) to 2-selenouridine (Se2U-RNA). Acts in a two-step process involving geranylation of 2-thiouridine (S2U) to S-geranyl-2-thiouridine (geS2U) and subsequent selenation of the latter derivative to 2-selenouridine (Se2U) in the tRNA chain. The protein is tRNA 2-selenouridine synthase of Azotobacter vinelandii (strain DJ / ATCC BAA-1303).